A 327-amino-acid polypeptide reads, in one-letter code: ATPase ASNA1 homolog (327 aa).

Residue 26 to 33 (KGGVGKTT) participates in ATP binding. Aspartate 57 is an active-site residue. Glutamate 238 and asparagine 265 together coordinate ATP. Cysteine 274 and cysteine 277 together coordinate Zn(2+).

It belongs to the arsA ATPase family. Homodimer.

The protein localises to the cytoplasm. Its subcellular location is the endoplasmic reticulum. ATPase required for the post-translational delivery of tail-anchored (TA) proteins to the endoplasmic reticulum. Recognizes and selectively binds the transmembrane domain of TA proteins in the cytosol. This complex then targets to the endoplasmic reticulum by membrane-bound receptors, where the tail-anchored protein is released for insertion. This process is regulated by ATP binding and hydrolysis. ATP binding drives the homodimer towards the closed dimer state, facilitating recognition of newly synthesized TA membrane proteins. ATP hydrolysis is required for insertion. Subsequently, the homodimer reverts towards the open dimer state, lowering its affinity for the membrane-bound receptor, and returning it to the cytosol to initiate a new round of targeting. This Entamoeba histolytica (strain ATCC 30459 / HM-1:IMSS / ABRM) protein is ATPase ASNA1 homolog.